Consider the following 81-residue polypeptide: Translational regulator CsrA (81 aa).

Belongs to the CsrA/RsmA family. In terms of assembly, homodimer; the beta-strands of each monomer intercalate to form a hydrophobic core, while the alpha-helices form wings that extend away from the core.

It localises to the cytoplasm. In terms of biological role, a translational regulator that binds mRNA to regulate translation initiation and/or mRNA stability. Usually binds in the 5'-UTR at or near the Shine-Dalgarno sequence preventing ribosome-binding, thus repressing translation. Its main target seems to be the major flagellin gene, while its function is anatagonized by FliW. This chain is Translational regulator CsrA, found in Halothermothrix orenii (strain H 168 / OCM 544 / DSM 9562).